We begin with the raw amino-acid sequence, 326 residues long: Thiamine thiazole synthase (326 aa).

Substrate is bound by residues cysteine 87, 108–109 (EA), glycine 116, and valine 181. Cysteine 215 is subject to 2,3-didehydroalanine (Cys). Substrate is bound by residues aspartate 217, histidine 232, methionine 284, and 294 to 296 (RMG).

It belongs to the THI4 family. In terms of assembly, homooctamer. Fe cation serves as cofactor. In terms of processing, during the catalytic reaction, a sulfide is transferred from Cys-215 to a reaction intermediate, generating a dehydroalanine residue.

It localises to the cytoplasm. Its subcellular location is the nucleus. The enzyme catalyses [ADP-thiazole synthase]-L-cysteine + glycine + NAD(+) = [ADP-thiazole synthase]-dehydroalanine + ADP-5-ethyl-4-methylthiazole-2-carboxylate + nicotinamide + 3 H2O + 2 H(+). Functionally, involved in biosynthesis of the thiamine precursor thiazole. Catalyzes the conversion of NAD and glycine to adenosine diphosphate 5-(2-hydroxyethyl)-4-methylthiazole-2-carboxylic acid (ADT), an adenylated thiazole intermediate. The reaction includes an iron-dependent sulfide transfer from a conserved cysteine residue of the protein to a thiazole intermediate. The enzyme can only undergo a single turnover, which suggests it is a suicide enzyme. May have additional roles in adaptation to various stress conditions and in DNA damage tolerance. The polypeptide is Thiamine thiazole synthase (Sclerotinia sclerotiorum (strain ATCC 18683 / 1980 / Ss-1) (White mold)).